The following is a 485-amino-acid chain: Probable L-xylulose kinase (485 aa).

The protein belongs to the FGGY kinase family. In terms of assembly, homodimer.

It catalyses the reaction L-xylulose + ATP = L-xylulose 5-phosphate + ADP + H(+). The sequence is that of Probable L-xylulose kinase (lyx) from Haemophilus influenzae (strain ATCC 51907 / DSM 11121 / KW20 / Rd).